Here is a 408-residue protein sequence, read N- to C-terminus: Zinc chaperone AztD (408 aa).

Positions 1 to 21 (MLRHLAGASALALTLAGAGFA) are cleaved as a signal peptide. The N-terminal Zn(2+)-binding motif; binds a third Zn(2+) with low affinity motif lies at 23–29 (DHDHDHE). H99, H102, D104, H124, H167, H218, and H408 together coordinate Zn(2+). C214 and C231 form a disulfide bridge.

As to quaternary structure, monomer.

It is found in the periplasm. Acts as a zinc chaperone in the AztABCD zinc transport system. Directly transfers one zinc cation to the solute binding protein AztC; the transfer occurs without the formation of a stable interaction. Binds 3 Zn(2+), two with high affinity and one with low affinity, and transfers only Zn(2+) bound to site 2 to AztC. Likely functions to store zinc in the periplasm and may be important for zinc accumulation in zinc-limited environments. This is Zinc chaperone AztD from Paracoccus denitrificans (strain Pd 1222).